We begin with the raw amino-acid sequence, 295 residues long: Glutenin, low molecular weight subunit PTDUCD1 (295 aa).

Positions 1-20 (MKTFLVFALLAVVATSTIAQ) are cleaved as a signal peptide. The disordered stretch occupies residues 30 to 61 (ERPWQEQPLPPQHTLFPQQQPFPQQQQPPFSQ). The span at 41-61 (QHTLFPQQQPFPQQQQPPFSQ) shows a compositional bias: low complexity.

Belongs to the gliadin/glutenin family. Disulfide-bridge linked aggregates.

Functionally, glutenins are high-molecular weight seed storage proteins of wheat endosperm. Thought to be responsible for the visco-elastic property of wheat dough. The polypeptide is Glutenin, low molecular weight subunit PTDUCD1 (Triticum aestivum (Wheat)).